The chain runs to 296 residues: 4-hydroxy-tetrahydrodipicolinate synthase (296 aa).

Pyruvate is bound at residue threonine 50. The active-site Proton donor/acceptor is tyrosine 138. Lysine 166 functions as the Schiff-base intermediate with substrate in the catalytic mechanism. Isoleucine 208 provides a ligand contact to pyruvate.

The protein belongs to the DapA family. As to quaternary structure, homotetramer; dimer of dimers.

Its subcellular location is the cytoplasm. It catalyses the reaction L-aspartate 4-semialdehyde + pyruvate = (2S,4S)-4-hydroxy-2,3,4,5-tetrahydrodipicolinate + H2O + H(+). It participates in amino-acid biosynthesis; L-lysine biosynthesis via DAP pathway; (S)-tetrahydrodipicolinate from L-aspartate: step 3/4. In terms of biological role, catalyzes the condensation of (S)-aspartate-beta-semialdehyde [(S)-ASA] and pyruvate to 4-hydroxy-tetrahydrodipicolinate (HTPA). This is 4-hydroxy-tetrahydrodipicolinate synthase from Ruthia magnifica subsp. Calyptogena magnifica.